The chain runs to 198 residues: Holliday junction branch migration complex subunit RuvA (198 aa).

The tract at residues 1–63 is domain I; it reads MYDYIKGQLT…EDAHLLFGFH (63 aa). Residues 64–142 are domain II; the sequence is TEDEKDVFLK…EAPQETGHTK (79 aa). A flexible linker region spans residues 143-147; that stretch reads ARSNK. The interval 148-198 is domain III; sequence AGNTQLDEAIEALLALGYKATELKKIRAFFEGTSETAEQYIKSALKLLMKG.

This sequence belongs to the RuvA family. In terms of assembly, homotetramer. Forms an RuvA(8)-RuvB(12)-Holliday junction (HJ) complex. HJ DNA is sandwiched between 2 RuvA tetramers; dsDNA enters through RuvA and exits via RuvB. An RuvB hexamer assembles on each DNA strand where it exits the tetramer. Each RuvB hexamer is contacted by two RuvA subunits (via domain III) on 2 adjacent RuvB subunits; this complex drives branch migration. In the full resolvosome a probable DNA-RuvA(4)-RuvB(12)-RuvC(2) complex forms which resolves the HJ.

The protein resides in the cytoplasm. In terms of biological role, the RuvA-RuvB-RuvC complex processes Holliday junction (HJ) DNA during genetic recombination and DNA repair, while the RuvA-RuvB complex plays an important role in the rescue of blocked DNA replication forks via replication fork reversal (RFR). RuvA specifically binds to HJ cruciform DNA, conferring on it an open structure. The RuvB hexamer acts as an ATP-dependent pump, pulling dsDNA into and through the RuvAB complex. HJ branch migration allows RuvC to scan DNA until it finds its consensus sequence, where it cleaves and resolves the cruciform DNA. The sequence is that of Holliday junction branch migration complex subunit RuvA from Streptococcus pyogenes serotype M6 (strain ATCC BAA-946 / MGAS10394).